Consider the following 513-residue polypeptide: ATP synthase subunit alpha (513 aa).

Residue 169–176 participates in ATP binding; sequence GDRQTGKT.

This sequence belongs to the ATPase alpha/beta chains family. In terms of assembly, F-type ATPases have 2 components, CF(1) - the catalytic core - and CF(0) - the membrane proton channel. CF(1) has five subunits: alpha(3), beta(3), gamma(1), delta(1), epsilon(1). CF(0) has three main subunits: a(1), b(2) and c(9-12). The alpha and beta chains form an alternating ring which encloses part of the gamma chain. CF(1) is attached to CF(0) by a central stalk formed by the gamma and epsilon chains, while a peripheral stalk is formed by the delta and b chains.

It localises to the cell inner membrane. The catalysed reaction is ATP + H2O + 4 H(+)(in) = ADP + phosphate + 5 H(+)(out). Produces ATP from ADP in the presence of a proton gradient across the membrane. The alpha chain is a regulatory subunit. The protein is ATP synthase subunit alpha of Actinobacillus succinogenes (strain ATCC 55618 / DSM 22257 / CCUG 43843 / 130Z).